The primary structure comprises 387 residues: Sorting nexin-7 (387 aa).

The region spanning 30–151 (KDLFITVDEP…IFLTAQAWEL (122 aa)) is the PX domain. A 1,2-diacyl-sn-glycero-3-phospho-(1D-myo-inositol-3-phosphate) contacts are provided by R73, Q75, K103, and R117. The BAR domain maps to 178-387 (GVKNRPEEFM…HLEETSEDKP (210 aa)).

This sequence belongs to the sorting nexin family. Heterodimer; heterodimerizes with SNX4.

It is found in the early endosome membrane. Functionally, involved in the regulation of endocytosis and in several stages of intracellular trafficking. Together with SNX4, involved in autophagosome assembly by regulating trafficking and recycling of phospholipid scramblase ATG9A. The chain is Sorting nexin-7 (SNX7) from Macaca fascicularis (Crab-eating macaque).